Reading from the N-terminus, the 1436-residue chain is Pleiotropic drug resistance protein 1 (1436 aa).

The ABC transporter 1 domain occupies 165–438 (LDSIHILPSK…FESMGFKCPE (274 aa)). 198–205 (GPPGSGKT) lines the ATP pocket. Positions 516-729 (QLLKVCTERE…SVNAILVNEF (214 aa)) constitute an ABC transmembrane type-2 1 domain. The next 7 helical transmembrane spans lie at 534–554 (FVYLFKFFQLLIIALMTMTIF), 567–587 (GGIYSGALFFVVIMIMFNGLS), 622–642 (IPVTFAEVGMWVFLTYYVMGF), 653–673 (FLLLLLVNQMASALFRFIAAV), 679–699 (VASTFGAFALLLQFALGGFIL), 707–727 (WWIWGYWTSPLMYSVNAILVN), and 764–784 (IGVGALAGFIVMFNIAYSVAL). The tract at residues 796–826 (TISDESENNESESSPQITSTQEGDSASENKK) is disordered. The span at 810 to 821 (PQITSTQEGDSA) shows a compositional bias: polar residues. Positions 838–1090 (ITFDEVVYSV…HLIKYFESIP (253 aa)) constitute an ABC transporter 2 domain. Residue 883-890 (GVSGAGKT) participates in ATP binding. The region spanning 1163-1377 (TQCMACLWKQ…TLYGLVASQF (215 aa)) is the ABC transmembrane type-2 2 domain. The next 7 helical transmembrane spans lie at 1184 to 1204 (AVRLIFTTFIALIFGTMFWDI), 1214 to 1234 (LVNAMGSMYAAVLFLGVQNSS), 1270 to 1290 (IPYIFVQATVYGLIVYSMIGF), 1301 to 1321 (FFFMFFTFLYFTFFGMMTVAV), 1327 to 1347 (VASIVAGFFYTVWNLFSGFIV), 1358 to 1378 (WYYWGCPIAWTLYGLVASQFG), and 1408 to 1428 (VVAAVIVAFAVVFAFTFALGI).

The protein belongs to the ABC transporter superfamily. ABCG family. PDR (TC 3.A.1.205) subfamily. As to expression, roots, petals and leaf epidermis, where it is confined to glandular trichomes (at protein level).

The protein resides in the cell membrane. Its function is as follows. Excretes secondary metabolites such as terpenes. Involved in both constitutive and jasmonic acid-dependent induced defense. Confers some resistance to sclareol and B.cinerea. The chain is Pleiotropic drug resistance protein 1 (PDR1) from Nicotiana plumbaginifolia (Leadwort-leaved tobacco).